Consider the following 190-residue polypeptide: UPF0316 protein Mboo_0605 (190 aa).

3 consecutive transmembrane segments (helical) span residues 3-23, 41-61, and 67-87; these read IGTF…RIAE, LAAY…GLVL, and FWNL…GMEI.

This sequence belongs to the UPF0316 family.

It localises to the cell membrane. This Methanoregula boonei (strain DSM 21154 / JCM 14090 / 6A8) protein is UPF0316 protein Mboo_0605.